We begin with the raw amino-acid sequence, 475 residues long: Ribulose bisphosphate carboxylase large chain (475 aa).

The propeptide occupies 1-2 (MS). Pro-3 bears the N-acetylproline mark. Lys-14 carries the N6,N6,N6-trimethyllysine modification. Residues Asn-123 and Thr-173 each coordinate substrate. The Proton acceptor role is filled by Lys-175. Lys-177 provides a ligand contact to substrate. Residues Lys-201, Asp-203, and Glu-204 each coordinate Mg(2+). Lys-201 is modified (N6-carboxylysine). His-294 serves as the catalytic Proton acceptor. Positions 295, 327, and 379 each coordinate substrate.

Belongs to the RuBisCO large chain family. Type I subfamily. Heterohexadecamer of 8 large chains and 8 small chains; disulfide-linked. The disulfide link is formed within the large subunit homodimers. Mg(2+) is required as a cofactor. The disulfide bond which can form in the large chain dimeric partners within the hexadecamer appears to be associated with oxidative stress and protein turnover.

The protein localises to the plastid. It is found in the chloroplast. It carries out the reaction 2 (2R)-3-phosphoglycerate + 2 H(+) = D-ribulose 1,5-bisphosphate + CO2 + H2O. The enzyme catalyses D-ribulose 1,5-bisphosphate + O2 = 2-phosphoglycolate + (2R)-3-phosphoglycerate + 2 H(+). Functionally, ruBisCO catalyzes two reactions: the carboxylation of D-ribulose 1,5-bisphosphate, the primary event in carbon dioxide fixation, as well as the oxidative fragmentation of the pentose substrate in the photorespiration process. Both reactions occur simultaneously and in competition at the same active site. This is Ribulose bisphosphate carboxylase large chain from Buxus microphylla (Littleleaf boxwood).